A 452-amino-acid chain; its full sequence is Glutamyl-tRNA(Gln) amidotransferase subunit A (452 aa).

Residues Lys-56 and Ser-131 each act as charge relay system in the active site. Ser-155 serves as the catalytic Acyl-ester intermediate.

This sequence belongs to the amidase family. GatA subfamily. As to quaternary structure, heterotrimer of A, B and C subunits.

The enzyme catalyses L-glutamyl-tRNA(Gln) + L-glutamine + ATP + H2O = L-glutaminyl-tRNA(Gln) + L-glutamate + ADP + phosphate + H(+). Allows the formation of correctly charged Gln-tRNA(Gln) through the transamidation of misacylated Glu-tRNA(Gln) in organisms which lack glutaminyl-tRNA synthetase. The reaction takes place in the presence of glutamine and ATP through an activated gamma-phospho-Glu-tRNA(Gln). The chain is Glutamyl-tRNA(Gln) amidotransferase subunit A from Campylobacter curvus (strain 525.92).